A 75-amino-acid polypeptide reads, in one-letter code: Large ribosomal subunit protein uL29 (75 aa).

This sequence belongs to the universal ribosomal protein uL29 family.

The polypeptide is Large ribosomal subunit protein uL29 (Nostoc punctiforme (strain ATCC 29133 / PCC 73102)).